The chain runs to 508 residues: Maturase K (508 aa).

Belongs to the intron maturase 2 family. MatK subfamily.

The protein localises to the plastid. The protein resides in the chloroplast. In terms of biological role, usually encoded in the trnK tRNA gene intron. Probably assists in splicing its own and other chloroplast group II introns. The protein is Maturase K of Antirrhinum majus (Garden snapdragon).